Consider the following 107-residue polypeptide: Anti-adapter protein IraM (107 aa).

This sequence belongs to the IraM/RssC family.

It is found in the cytoplasm. Inhibits RpoS proteolysis by regulating RssB activity, thereby increasing the stability of the sigma stress factor RpoS during magnesium starvation. This is Anti-adapter protein IraM from Escherichia coli O7:K1 (strain IAI39 / ExPEC).